Consider the following 356-residue polypeptide: DNA polymerase IV (356 aa).

The UmuC domain maps to 6–186; that stretch reads IVHIDMDAFY…LPVDAFHGIG (181 aa). Residues D10 and D104 each coordinate Mg(2+). E105 is an active-site residue.

The protein belongs to the DNA polymerase type-Y family. As to quaternary structure, monomer. Mg(2+) is required as a cofactor.

It localises to the cytoplasm. It catalyses the reaction DNA(n) + a 2'-deoxyribonucleoside 5'-triphosphate = DNA(n+1) + diphosphate. Functionally, poorly processive, error-prone DNA polymerase involved in untargeted mutagenesis. Copies undamaged DNA at stalled replication forks, which arise in vivo from mismatched or misaligned primer ends. These misaligned primers can be extended by PolIV. Exhibits no 3'-5' exonuclease (proofreading) activity. May be involved in translesional synthesis, in conjunction with the beta clamp from PolIII. The sequence is that of DNA polymerase IV from Gluconobacter oxydans (strain 621H) (Gluconobacter suboxydans).